A 310-amino-acid polypeptide reads, in one-letter code: Receptor homology region, transmembrane domain- and RING domain-containing protein 1 (310 aa).

Residues 1–25 form the signal peptide; that stretch reads MRLVVSSCLLVAAPFLSSLLRVSLA. The Lumenal segment spans residues 26-168; the sequence is TVVLNSISAS…NPPDRGSAWT (143 aa). A disulfide bridge links cysteine 65 with cysteine 92. A glycan (N-linked (GlcNAc...) asparagine) is linked at asparagine 75. In terms of domain architecture, PA spans 81–149; it reads TTKFALIIRG…VAGEILRKYA (69 aa). The helical transmembrane segment at 169 to 189 threads the bilayer; that stretch reads VLAISFFSLLLIVTFLLIAFF. Topologically, residues 190 to 310 are cytoplasmic; that stretch reads APRHWTQWRG…FAFAQSSQSR (121 aa). An RING-type; atypical zinc finger spans residues 232–274; the sequence is CAICLEDYRFGESLRLLPCQHAFHLNCIDSWLTKWGTSCPVCK. Positions 284-293 are enriched in basic and acidic residues; the sequence is SEVHKRESPR. The segment at 284-310 is disordered; sequence SEVHKRESPRTDTSTSRFAFAQSSQSR. Residues 294–310 are compositionally biased toward polar residues; it reads TDTSTSRFAFAQSSQSR.

Expressed in leaves, stems, flowers and siliques.

It localises to the prevacuolar compartment membrane. The protein localises to the protein storage vacuole membrane. Its subcellular location is the golgi apparatus membrane. Functionally, involved in the trafficking of vacuolar proteins. Functions probably as a sorting receptor for protein trafficking to the protein storage vacuole (PSV) by binding the C-terminal vacuolar sorting determinant (VSD) of vacuolar-sorted proteins. The sequence is that of Receptor homology region, transmembrane domain- and RING domain-containing protein 1 (RMR1) from Arabidopsis thaliana (Mouse-ear cress).